The following is an 80-amino-acid chain: Serine rich endogenous peptide 18 (80 aa).

An N-terminal signal peptide occupies residues 1 to 25 (MYNVVVCLLTLSFLLLTGLSNTAEA). Residues 45-59 (KAEVGGSCSPHAHGR) carry the SCOOP motif motif. The disordered stretch occupies residues 50-80 (GSCSPHAHGRGPPNRPGSSNIPGSPKRCTKP). The SxS motif essential for MIK2 binding signature appears at 51–53 (SCS).

It belongs to the serine rich endogenous peptide (SCOOP) phytocytokine family. Interacts with MIK2 (via extracellular leucine-rich repeat domain); this interaction triggers the formation of complex between MIK2 and the BAK1/SERK3 and SERK4 coreceptors, and subsequent BAK1 activation by phosphorylation.

It localises to the cell membrane. Its subcellular location is the secreted. It is found in the extracellular space. The protein localises to the apoplast. Brassicaceae-specific phytocytokine (plant endogenous peptide released into the apoplast) perceived by MIK2 in a BAK1/SERK3 and SERK4 coreceptors-dependent manner, that modulates various physiological and antimicrobial processes including growth prevention and reactive oxygen species (ROS) response regulation. The sequence is that of Serine rich endogenous peptide 18 from Arabidopsis thaliana (Mouse-ear cress).